The sequence spans 935 residues: Transmembrane channel-like protein 1 (935 aa).

Disordered regions lie at residues 1 to 21 (MPRH…DEGK) and 37 to 204 (ERGK…LGSL). 5 stretches are compositionally biased toward basic and acidic residues: residues 37–47 (ERGKIKQASRD), 54–79 (RNGE…EKKH), 109–136 (DKSS…EKDV), 152–163 (NHEKTKQHLKEE), and 172–184 (PETT…KSES). A run of 10 helical transmembrane segments spans residues 303–340 (SSVA…MGKP), 392–423 (RMPL…ANEE), 480–510 (LTRF…VRRS), 523–550 (WWER…ISTL), 555–589 (PRIA…QLKR), 633–670 (WETM…VRFL), 690–710 (VSGN…GAFY), 714–736 (LPAL…VMCC), 751–774 (NFYM…TIVS), and 818–851 (LVLP…KKKL). Residues 874 to 886 (EQARKAGEQRRNS) are compositionally biased toward basic and acidic residues. The segment at 874–935 (EQARKAGEQR…QQPQKNSKKR (62 aa)) is disordered. 2 stretches are compositionally biased toward polar residues: residues 899-919 (SHVS…TSSG) and 926-935 (QQPQKNSKKR).

This sequence belongs to the TMC family. In terms of assembly, interacts specifically with isoform CD3 of PCDH15A (via cytoplasmic domain). As to expression, in adults, expression is restricted to the hair cells of inner ear and lateral line organ. Expressed at higher levels in the larval lateral-line neuromasts than in the larval inner ear. Expressed in the sensory hair cell patches of the ear at 4 days post fertilization (dpf).

The protein resides in the cell membrane. The catalysed reaction is Ca(2+)(in) = Ca(2+)(out). In terms of biological role, pore-forming subunit of the mechanotransducer (MET) non-selective cation channel complex located at the tips of hair-cell stereocilia. Highly permeable to calcium and likely transports monovalent cations. The sequence is that of Transmembrane channel-like protein 1 from Danio rerio (Zebrafish).